The chain runs to 749 residues: Cytosolic phospholipase A2 (749 aa).

In terms of domain architecture, C2 spans 1-124; the sequence is MASIDPYQHI…GEKKQVPFTF (124 aa). The segment at 1–178 is phospholipid binding; that stretch reads MASIDPYQHI…LRKLLGPEKT (178 aa). Ca(2+)-binding residues include Asp-40, Thr-41, Asp-43, Asn-65, Asp-93, Ala-94, and Asn-95. A PLA2c domain is found at 138–740; it reads VCSSTDLRFS…NDVEARKLLH (603 aa). The Nucleophile role is filled by Ser-229. Residues 417-458 are disordered; sequence MEEEIENLKPKHILGNDSSDSDDEMQEPKGTENSKAEEEYQR. Residues 442-457 are compositionally biased toward basic and acidic residues; that stretch reads QEPKGTENSKAEEEYQ. The Proton acceptor role is filled by Asp-549.

The protein resides in the cytoplasm. It localises to the cytoplasmic vesicle. The catalysed reaction is a 1,2-diacyl-sn-glycero-3-phosphocholine + H2O = a 1-acyl-sn-glycero-3-phosphocholine + a fatty acid + H(+). The enzyme catalyses a 1-acyl-sn-glycero-3-phosphocholine + H2O = sn-glycerol 3-phosphocholine + a fatty acid + H(+). Its activity is regulated as follows. Stimulated by agonists such as ATP, EGF, thrombin and bradykinin as well as by cytosolic Ca(2+). In terms of biological role, selectively hydrolyzes arachidonyl phospholipids in the sn-2 position releasing arachidonic acid. Together with its lysophospholipid activity, it is implicated in the initiation of the inflammatory response. This chain is Cytosolic phospholipase A2 (pla2g4a), found in Xenopus tropicalis (Western clawed frog).